Here is a 635-residue protein sequence, read N- to C-terminus: MAGGAGWAGAPAALLRSVRRLREVFEVCGRDPDGFLRVERVAALGLRFGQGEEVEKLVKCLDPNDLGRINFKDFCRGVFAMKGCEELLKDVLSVESAGTLPCSPDIPDCVEQGSDFSGSTDGEQLPREPDFFQEDEEEAMTLALPEGPQELDMDSPMESSQGPEGSVKGCGEEKEPELGGLFLPEDKCLVLTPSVTTSDLSTHSTASLISNEEQFEDYGEGDDVDCAPSSPCPDDETRTNVYSDLGSSVSSSAGQTPRKMRHAYNSELLDVYCSQCCKKINLLNDLEARLKNLKANSPNRKISSTAFGRQLMHNSNFSSSNGSTEDLFRDSIDSCDNDITEKVSFLEKKVTELENDSLTSGGLKSKLKQENMQLVHRVHELEEMVKDQETTAEQALEEEARRHREVYCKLEREKSTELELLNTRVQQLEEENTDLRTTVARLKSQTEKLDEERQRMSDRLEDTSLRLKDEMDLYKRMMDKLRQNRLEFQKEREATQELIEDLRRELEHLQMYKLDCERPGRGRSSSGLGEFNARAREVELEHEVKRLKQENHKLRDQNDDLNGQILSLSLYEAKNLFATQTKAQSLAAEIDTASRDELMEALKEQEEINFRLRQYMDKIILAILDHNPSILEIKH.

One can recognise an EF-hand domain in the interval 49-84 (GQGEEVEKLVKCLDPNDLGRINFKDFCRGVFAMKGC). Ca(2+) is bound by residues aspartate 62, asparagine 64, arginine 68, and aspartate 73. The tract at residues 82 to 635 (KGCEELLKDV…HNPSILEIKH (554 aa)) is necessary for interaction with RAB11A, subcellular location, homo- or heterooligomerization. Disordered regions lie at residues 147 to 176 (GPQE…EKEP) and 216 to 258 (EDYG…QTPR). Positions 216–225 (EDYGEGDDVD) are enriched in acidic residues. A coiled-coil region spans residues 279-615 (KINLLNDLEA…EEINFRLRQY (337 aa)). Residues 572-634 (EAKNLFATQT…DHNPSILEIK (63 aa)) form the FIP-RBD domain.

In terms of assembly, homodimer. Forms a complex with Rab11 (RAB11A or RAB11B) and ARF6. Interacts with RAB11A; the interaction is direct. Forms a heterooligomeric complex with RAB11FIP2, RAB11FIP3 and RAB11FIP5. Interacts with ECPAS. Strongly expressed in the developing retina. Expressed predominantly in neural tissues.

The protein resides in the recycling endosome membrane. The protein localises to the cleavage furrow. Its subcellular location is the midbody. It is found in the cytoplasmic vesicle. Functionally, acts as a regulator of endocytic traffic by participating in membrane delivery. Required for the abscission step in cytokinesis, possibly by acting as an 'address tag' delivering recycling endosome membranes to the cleavage furrow during late cytokinesis. May play a role in differentiation during retinal development, in a Rab11-independent manner. The protein is Rab11 family-interacting protein 4 (Rab11fip4) of Mus musculus (Mouse).